A 119-amino-acid chain; its full sequence is Large ribosomal subunit protein bL20 (119 aa).

It belongs to the bacterial ribosomal protein bL20 family.

Its function is as follows. Binds directly to 23S ribosomal RNA and is necessary for the in vitro assembly process of the 50S ribosomal subunit. It is not involved in the protein synthesizing functions of that subunit. In Caldicellulosiruptor bescii (strain ATCC BAA-1888 / DSM 6725 / KCTC 15123 / Z-1320) (Anaerocellum thermophilum), this protein is Large ribosomal subunit protein bL20.